A 440-amino-acid chain; its full sequence is Glycerol-3-phosphate dehydrogenase [NAD(+)] 2, mitochondrial (440 aa).

The N-terminal 16 residues, 1–16 (MLAVRRLTRYTFLKRT), are a transit peptide targeting the mitochondrion. 3 positions are modified to phosphoserine: serine 70, serine 72, and serine 75. NAD(+) contacts are provided by residues 90-95 (GSGNWG), phenylalanine 122, and phenylalanine 178. Residue lysine 201 participates in substrate binding. Alanine 234 serves as a coordination point for NAD(+). Lysine 294 functions as the Proton acceptor in the catalytic mechanism. Residues arginine 359 and glutamine 388 each coordinate NAD(+). 359–360 (RN) contributes to the substrate binding site.

It belongs to the NAD-dependent glycerol-3-phosphate dehydrogenase family.

The protein localises to the cytoplasm. Its subcellular location is the mitochondrion. It catalyses the reaction sn-glycerol 3-phosphate + NAD(+) = dihydroxyacetone phosphate + NADH + H(+). Its function is as follows. Catalyzes the production of glycerol under anaerobic growth conditions. Glycerol production serves as a redox sink by consuming the excess cytosolic NADH during anaerobic metabolism. This is Glycerol-3-phosphate dehydrogenase [NAD(+)] 2, mitochondrial from Saccharomyces cerevisiae (strain ATCC 204508 / S288c) (Baker's yeast).